A 222-amino-acid chain; its full sequence is Kinetochore protein Spc25 (222 aa).

The stretch at 51 to 86 (RHQRKVGKLQKVLMERREELDKRVSFIEELDRELEA) forms a coiled coil.

Belongs to the SPC25 family. In terms of assembly, component of the Ndc80 complex, which is composed of Ndc80, Nuf2 and Spc25.

The protein resides in the nucleus. Its subcellular location is the chromosome. The protein localises to the centromere. It is found in the kinetochore. Acts as a component of the essential kinetochore-associated Ndc80 complex, which is required for chromosome segregation and spindle checkpoint activity during meiosis and mitosis. Required for kinetochore integrity and the organization of stable microtubule binding sites in the outer plate of the kinetochore. Participates in SAC signaling that responds specifically to disruptions in spindle microtubule dynamics. The NDC80 complex synergistically enhances the affinity of the SKA1 complex for microtubules and may allow the NDC80 complex to track depolymerizing microtubules. The polypeptide is Kinetochore protein Spc25 (Drosophila melanogaster (Fruit fly)).